The following is a 71-amino-acid chain: Translation initiation factor IF-1 (71 aa).

One can recognise an S1-like domain in the interval 1–71; sequence MANDVIEIEG…TKGRITYRFR (71 aa).

This sequence belongs to the IF-1 family. Component of the 30S ribosomal translation pre-initiation complex which assembles on the 30S ribosome in the order IF-2 and IF-3, IF-1 and N-formylmethionyl-tRNA(fMet); mRNA recruitment can occur at any time during PIC assembly.

It localises to the cytoplasm. One of the essential components for the initiation of protein synthesis. Stabilizes the binding of IF-2 and IF-3 on the 30S subunit to which N-formylmethionyl-tRNA(fMet) subsequently binds. Helps modulate mRNA selection, yielding the 30S pre-initiation complex (PIC). Upon addition of the 50S ribosomal subunit IF-1, IF-2 and IF-3 are released leaving the mature 70S translation initiation complex. The chain is Translation initiation factor IF-1 from Leuconostoc mesenteroides subsp. mesenteroides (strain ATCC 8293 / DSM 20343 / BCRC 11652 / CCM 1803 / JCM 6124 / NCDO 523 / NBRC 100496 / NCIMB 8023 / NCTC 12954 / NRRL B-1118 / 37Y).